The following is a 792-amino-acid chain: Glucocorticoid receptor (792 aa).

Positions 1–15 (MDSKESLAPPGRDEV) are enriched in basic and acidic residues. Residues 1-25 (MDSKESLAPPGRDEVPSSLLGRGRG) form a disordered region. The modulating stretch occupies residues 1 to 436 (MDSKESLAPP…STATGPPPKL (436 aa)). Arginine 24 carries the omega-N-methylarginine modification. The residue at position 46 (serine 46) is a Phosphoserine. The interval 67-98 (SKGSASNAQQQQQQQQQQQQQQQQQPQPDLSK) is disordered. Over residues 75–94 (QQQQQQQQQQQQQQQQQPQP) the composition is skewed to low complexity. Residues serine 131, serine 152, and serine 159 each carry the phosphoserine modification. The segment covering 148–162 (NRSTSRPENPKSSTP) has biased composition (polar residues). A disordered region spans residues 148-201 (NRSTSRPENPKSSTPAAGCATPTEKEFPQTHSDPSSEQQNRKSQPGTNGGSVKL). Threonine 168 is modified (phosphothreonine). A compositionally biased stretch (polar residues) spans 176 to 193 (QTHSDPSSEQQNRKSQPG). 4 positions are modified to phosphoserine: serine 221, serine 229, serine 243, and serine 284. Residues lysine 294 and lysine 310 each participate in a glycyl lysine isopeptide (Lys-Gly) (interchain with G-Cter in SUMO); alternate cross-link. Residues lysine 294 and lysine 310 each participate in a glycyl lysine isopeptide (Lys-Gly) (interchain with G-Cter in SUMO2); alternate cross-link. Phosphoserine is present on residues serine 324 and serine 421. A DNA-binding region (nuclear receptor) is located at residues 434–509 (PKLCLVCSDE…AGMNLEARKT (76 aa)). A Glycyl lysine isopeptide (Lys-Gly) (interchain with G-Cter in ubiquitin) cross-link involves residue lysine 435. NR C4-type zinc fingers lie at residues 437–457 (CLVCSDEASGCHYGVLTCGSC) and 473–497 (CAGRNDCIIDKIRRKNCPACRYRKC). An N6-acetyllysine mark is found at lysine 496, lysine 508, lysine 510, and lysine 511. The segment at 501 to 792 (GMNLEARKTK…NIKKLLFHQK (292 aa)) is interaction with CLOCK. The hinge stretch occupies residues 503 to 538 (NLEARKTKKKIKGIQQATAGVSQDTSENANKTIVPA). Residues 539 to 773 (ALPQLTPTLV…FPEMLAEIIT (235 aa)) enclose the NR LBD domain. The segment at 547 to 712 (LVSLLEVIEP…EIRMTYIKEL (166 aa)) is interaction with CRY1. A Glycyl lysine isopeptide (Lys-Gly) (interchain with G-Cter in SUMO) cross-link involves residue lysine 718.

The protein belongs to the nuclear hormone receptor family. NR3 subfamily. Heteromultimeric cytoplasmic complex with HSP90AA1, HSPA1A/HSPA1B, and FKBP5 or another immunophilin such as PPID, STIP1, or the immunophilin homolog PPP5C. Upon ligand binding FKBP5 dissociates from the complex and FKBP4 takes its place, thereby linking the complex to dynein and mediating transport to the nucleus, where the complex dissociates. Probably forms a complex composed of chaperones HSP90 and HSP70, co-chaperones CDC37, PPP5C, TSC1 and client protein TSC2, CDK4, AKT, RAF1 and NR3C1; this complex does not contain co-chaperones STIP1/HOP and PTGES3/p23. Directly interacts with UNC45A. Binds to DNA as a homodimer, and as heterodimer with NR3C2 or the retinoid X receptor. Binds STAT5A and STAT5B homodimers and heterodimers. Interacts with NRIP1, POU2F1, POU2F2 and TRIM28. Interacts with several coactivator complexes, including the SMARCA4 complex, CREBBP/EP300, TADA2L (Ada complex) and p160 coactivators such as NCOA2 and NCOA6. Interaction with BAG1 inhibits transactivation. Interacts with HEXIM1 and TGFB1I1. Interacts with NCOA1. Interacts with NCOA3, SMARCA4, SMARCC1, SMARCD1, and SMARCE1. Interacts with CLOCK, CRY1 and CRY2 in a ligand-dependent fashion. Interacts with CIART. Interacts with RWDD3. Interacts with UBE2I/UBC9 and this interaction is enhanced in the presence of RWDD3. Interacts with GRIP1. Interacts with NR4A3 (via nuclear receptor DNA-binding domain), represses transcription activity of NR4A3 on the POMC promoter Nur response element (NurRE). Directly interacts with PNRC2 to attract and form a complex with UPF1 and DCP1A; the interaction leads to rapid mRNA degradation. Interacts with GSK3B. Interacts with FNIP1 and FNIP2. Interacts (via C-terminus) with HNRNPU (via C-terminus). Interacts with MCM3AP. Interacts (via domain NR LBD) with HSP90AA1 and HSP90AB1. In the absence of hormonal ligand, interacts with TACC1. Interacts (via NR LBD domain) with ZNF764 (via KRAB domain); the interaction regulates transcription factor activity of NR3C1 by directing its actions toward certain biologic pathways. Acetylation by CLOCK reduces its binding to glucocorticoid response elements and its transcriptional activity. Post-translationally, increased proteasome-mediated degradation in response to glucocorticoids. In terms of processing, phosphorylated in the absence of hormone; becomes hyperphosphorylated in the presence of glucocorticoids. Phosphorylated in the absence of hormone; becomes hyperphosphorylated in the presence of glucocorticoid. The Ser-221, Ser-243 and Ser-421-phosphorylated forms are mainly cytoplasmic, and the Ser-229-phosphorylated form is nuclear. Phosphorylation at Ser-229 increases transcriptional activity. Phosphorylation at Ser-221, Ser-243 and Ser-421 decreases signaling capacity. Phosphorylation at Ser-421 may protect from glucocorticoid-induced apoptosis. Phosphorylation at Ser-221 and Ser-229 is not required in regulation of chromosome segregation. May be dephosphorylated by PPP5C, attenuates NR3C1 action. Sumoylation at Lys-294 and Lys-310 negatively regulates its transcriptional activity. Sumoylation at Lys-718 positively regulates its transcriptional activity in the presence of RWDD3. Sumoylation at Lys-294 and Lys-310 is dispensable whereas sumoylation at Lys-718 is critical for the stimulatory effect of RWDD3 on its transcriptional activity. Heat shock increases sumoylation in a RWDD3-dependent manner. Post-translationally, ubiquitinated. Ubiquitination by UBR5 leads to its degradation: UBR5 specifically recognizes and binds ligand-bound NR3C1 when it is not associated with coactivators (NCOAs). In presence of NCOAs, the UBR5-degron is not accessible, preventing its ubiquitination and degradation. Expressed in spleen, kidney and liver. Expressed in a circadian manner in the liver. In terms of tissue distribution, expressed at highest level in spleen with lesser amounts in kidney and liver.

The protein localises to the cytoplasm. Its subcellular location is the nucleus. It is found in the mitochondrion. It localises to the cytoskeleton. The protein resides in the spindle. The protein localises to the microtubule organizing center. Its subcellular location is the centrosome. It is found in the chromosome. It localises to the nucleoplasm. Receptor for glucocorticoids (GC). Has a dual mode of action: as a transcription factor that binds to glucocorticoid response elements (GRE), both for nuclear and mitochondrial DNA, and as a modulator of other transcription factors. Affects inflammatory responses, cellular proliferation and differentiation in target tissues. Involved in chromatin remodeling. Plays a role in rapid mRNA degradation by binding to the 5' UTR of target mRNAs and interacting with PNRC2 in a ligand-dependent manner which recruits the RNA helicase UPF1 and the mRNA-decapping enzyme DCP1A, leading to RNA decay. Could act as a coactivator for STAT5-dependent transcription upon growth hormone (GH) stimulation and could reveal an essential role of hepatic GR in the control of body growth. Its function is as follows. Has transcriptional activation and repression activity. Mediates glucocorticoid-induced apoptosis. Promotes accurate chromosome segregation during mitosis. May act as a tumor suppressor. May play a negative role in adipogenesis through the regulation of lipolytic and antilipogenic gene expression. Functionally, acts as a dominant negative inhibitor of isoform 1. Has intrinsic transcriptional activity independent of isoform Alpha when both isoforms are coexpressed. Loses this transcription modulator function on its own. Has no hormone-binding activity. May play a role in controlling glucose metabolism by maintaining insulin sensitivity. Reduces hepatic gluconeogenesis through down-regulation of PEPCK in an isoform Alpha-dependent manner. Directly regulates STAT1 expression in isoform Alpha-independent manner. The chain is Glucocorticoid receptor (Nr3c1) from Mus musculus (Mouse).